Consider the following 79-residue polypeptide: Conotoxin 12 (79 aa).

Residues 1-22 (MKLTCVLIITVLFLTASQLITA) form the signal peptide. The propeptide occupies 23–47 (DYSRDQRQYRAVRLGDEMRNFKGAR). Cystine bridges form between C49/C62, C56/C67, and C61/C77.

It belongs to the conotoxin O1 superfamily. In terms of tissue distribution, expressed by the venom duct.

It is found in the secreted. The protein is Conotoxin 12 of Conus vexillum (Flag cone).